Here is a 325-residue protein sequence, read N- to C-terminus: Glutarate 2-hydroxylase (325 aa).

Fe cation contacts are provided by His-160, Asp-162, and His-292.

This sequence belongs to the glutarate hydroxylase family. As to quaternary structure, homotetramer. Fe(2+) serves as cofactor.

The catalysed reaction is glutarate + 2-oxoglutarate + O2 = (S)-2-hydroxyglutarate + succinate + CO2. Its pathway is amino-acid degradation. Its function is as follows. Acts as an alpha-ketoglutarate-dependent dioxygenase catalyzing hydroxylation of glutarate (GA) to L-2-hydroxyglutarate (L2HG). Functions in a L-lysine degradation pathway that proceeds via cadaverine, glutarate and L-2-hydroxyglutarate. The sequence is that of Glutarate 2-hydroxylase from Escherichia coli (strain K12 / MC4100 / BW2952).